The following is a 156-amino-acid chain: CASP-like protein 5C1 (156 aa).

Topologically, residues 1–21 are cytoplasmic; sequence MENRERAGAGAVGSAGSLGLR. A helical transmembrane segment spans residues 22–42; sequence VGQAVFSSASLLFMSVGVEFF. The Extracellular portion of the chain corresponds to 43–46; it reads SYTA. Residues 47–67 traverse the membrane as a helical segment; that stretch reads FCFLVTIMGLVIPWSCTLAMI. Residues 68-81 are Cytoplasmic-facing; that stretch reads DVYSILVGCPLRVP. The chain crosses the membrane as a helical span at residues 82 to 102; it reads GVMVIVVIGDWVLAILSLAAA. The Extracellular portion of the chain corresponds to 103 to 132; it reads SSSAAVIDLLLQFHGSHCSPRFCGRYQLSA. Residues 133–153 form a helical membrane-spanning segment; the sequence is MMAFLSWFLTAASSLFNLWFI. At 154–156 the chain is on the cytoplasmic side; the sequence is ASR.

Belongs to the Casparian strip membrane proteins (CASP) family. Homodimer and heterodimers.

It localises to the cell membrane. In Oryza sativa subsp. japonica (Rice), this protein is CASP-like protein 5C1.